The chain runs to 1017 residues: Centriole and centriolar satellite protein OFD1 (1017 aa).

Positions 69–101 constitute a LisH domain; it reads LIGASNSLVADHLQRCGYEYSLSVFFPESGLAK. Coiled-coil stretches lie at residues 188–557 and 626–659; these read PHRS…ENEV and EFIASSTKAKVRELEQEAERLEKAFRTYYQRATQ. The mediates homooligomerization stretch occupies residues 609–666; that stretch reads PPYVNTATEASSPESDFEFIASSTKAKVRELEQEAERLEKAFRTYYQRATQNPSTSPQ. Disordered stretches follow at residues 657–676, 685–705, 721–749, and 769–801; these read ATQNPSTSPQPAKSPPSVNS, SSSMDRPVSAEDRVVSEQPLG, GSVVSRPRRTSSSTRLSSTPHPKSRRSLD, and LDRVSASPAASPSPCPERTAQASPVPSRHSFSG. A phosphoserine mark is found at Ser-664, Ser-670, Ser-687, Ser-722, Ser-737, Ser-747, Ser-791, and Ser-823. Over residues 722–740 the composition is skewed to low complexity; the sequence is SVVSRPRRTSSSTRLSSTP. The stretch at 895–966 forms a coiled coil; sequence ELHMKERRQR…AHCENTLEKY (72 aa). The segment covering 897–988 has biased composition (basic and acidic residues); that stretch reads HMKERRQREE…ADKSSKKSGK (92 aa). The disordered stretch occupies residues 897 to 1017; sequence HMKERRQREE…FSHEEPDDMW (121 aa).

It belongs to the OFD1 family. As to quaternary structure, homooligomer. Interacts with LCA5. Interacts with RUVBL1; the interaction is direct and may mediate interaction with the NuA4 histone acetyltransferase complex. Interacts with SDCCAG8; the interaction is direct. Interacts with MAP1LC3B. Interacts with C2CD3; OFD1 may act as a negative regulator of C2CD3. Forms a complex with KIAA0753/OFIP and CEP20/FOR20; the interaction with CEP20 is detected only in the presence of KIAA0753. Interacts with PCM1; this interaction may be mediated by KIAA0753/OFIP. Interacts with TBC1D31; regulates OFD1 activity in cilium assembly. In terms of processing, phosphorylated. Phosphorylation at Ser-737, by the cAMP-dependent protein kinase PKA, triggers ubiquitination and proteasomal degradation of OFD1. Also increases its interaction with TBC1D31 and regulates its function in ciliogenesis. Ubiquitinated by PJA2, upon phosphorylation at Ser-737 by PKA, leads to the proteasomal degradation of OFD1.

It is found in the cytoplasm. It localises to the cytoskeleton. Its subcellular location is the microtubule organizing center. The protein resides in the centrosome. The protein localises to the centriole. It is found in the centriolar satellite. It localises to the cilium basal body. Its subcellular location is the nucleus. Functionally, component of the centrioles controlling mother and daughter centrioles length. Recruits to the centriole IFT88 and centriole distal appendage-specific proteins including CEP164. Involved in the biogenesis of the cilium, a centriole-associated function. The cilium is a cell surface projection found in many vertebrate cells required to transduce signals important for development and tissue homeostasis. Plays an important role in development by regulating Wnt signaling and the specification of the left-right axis. Only OFD1 localized at the centriolar satellites is removed by autophagy, which is an important step in the ciliogenesis regulation. The protein is Centriole and centriolar satellite protein OFD1 (Ofd1) of Mus musculus (Mouse).